We begin with the raw amino-acid sequence, 264 residues long: MEFVKLQCNICFSVAEIKNYFLQPIDRLTIIPVLELDTCKHQLCSMCIRKIRKRKKVPCPLCRVESLHFNVYSVNRNVVDVIKCSASSVAQWNKINANFDAASLASVLFEKSLLDDAEDNNANADDTMLSEAQAILKKLQVDIAEQTQLNIKQQLDLDKLQQTSVSMQEKLDKIKSDYNNMHKSFKELQLKRITTEKALKSLNDDYAKLASKNAKLSSENKVLSNKNIELIKHKNLLQNEYTTLQSYKCITNATITTNVTINVD.

The RING-type zinc-finger motif lies at 8-63 (CNICFSVAEIKNYFLQPIDRLTIIPVLELDTCKHQLCSMCIRKIRKRKKVPCPLCR).

It is found in the host nucleus. Functionally, plays a role in the proper expression of late and very late genes. The sequence is that of Zinc finger protein CG30 (CG30) from Autographa californica nuclear polyhedrosis virus (AcMNPV).